The chain runs to 168 residues: MAPQNMPAVSIDINMFWQIINFLILMFFFKKYFQKPIAKVLDARKEKIANDLKQAEIDKEMAAKANGEAQGIVKSAKTEANEMLLRAEKKADERKETILKEANTQREKMLKSAEVEIEKMKEQARKELQLEVTDLAVKLAEKMINEKVDAKIGANLLDQFIGEVGEEK.

A helical membrane pass occupies residues 9–29; the sequence is VSIDINMFWQIINFLILMFFF.

The protein belongs to the ATPase B chain family. As to quaternary structure, F-type ATPases have 2 components, F(1) - the catalytic core - and F(0) - the membrane proton channel. F(1) has five subunits: alpha(3), beta(3), gamma(1), delta(1), epsilon(1). F(0) has three main subunits: a(1), b(2) and c(10-14). The alpha and beta chains form an alternating ring which encloses part of the gamma chain. F(1) is attached to F(0) by a central stalk formed by the gamma and epsilon chains, while a peripheral stalk is formed by the delta and b chains.

The protein resides in the cell inner membrane. F(1)F(0) ATP synthase produces ATP from ADP in the presence of a proton or sodium gradient. F-type ATPases consist of two structural domains, F(1) containing the extramembraneous catalytic core and F(0) containing the membrane proton channel, linked together by a central stalk and a peripheral stalk. During catalysis, ATP synthesis in the catalytic domain of F(1) is coupled via a rotary mechanism of the central stalk subunits to proton translocation. Functionally, component of the F(0) channel, it forms part of the peripheral stalk, linking F(1) to F(0). The protein is ATP synthase subunit b, sodium ion specific (atpF) of Propionigenium modestum.